Consider the following 79-residue polypeptide: Small ribosomal subunit protein uS17 (79 aa).

Belongs to the universal ribosomal protein uS17 family. In terms of assembly, part of the 30S ribosomal subunit.

One of the primary rRNA binding proteins, it binds specifically to the 5'-end of 16S ribosomal RNA. The chain is Small ribosomal subunit protein uS17 from Bartonella tribocorum (strain CIP 105476 / IBS 506).